The following is a 94-amino-acid chain: Small ribosomal subunit protein uS19 (94 aa).

Belongs to the universal ribosomal protein uS19 family.

Its function is as follows. Protein S19 forms a complex with S13 that binds strongly to the 16S ribosomal RNA. In Nitrosomonas eutropha (strain DSM 101675 / C91 / Nm57), this protein is Small ribosomal subunit protein uS19.